The following is a 499-amino-acid chain: MGVVLPPPPLSMLMLVLMLLPVASASEAEHRLFQYLFEDYNEIIRPVANVSHPVIIQFEVSMSQLVKVDEVNQIMETNLWLKQIWNDYKLKWKPSDYQGVEFMRVPAEKIWKPDIVLYNNADGDFQVDDKTKALLKYTGEVTWIPPAIFKSSCKIDVTYFPFDYQNCTMKFGSWSYDKAKIDLVLIGSSMNLKDYWESGEWAIIKAPGYKHEIKYNCCEEIYQDITYSLYIRRLPLFYTINLIIPCLLISFLTVLVFYLPSDCGEKVTLCISVLLSLTVFLLVITETIPSTSLVIPLIGEYLLFTMIFVTLSIVITVFVLNVHYRTPTTHTMPTWVKAVFLNLLPRVMFMTRPTSTEEDAPKTRNFYGAELSNLNCFSRADSKSCKEGYPCQDGTCGYCHHRRVKISNFSANLTRSSSSESVDAVLSLSALSPEIKEAIQSVKYIAENMKAQNVAKEIQDDWKYVAMVIDRIFLWVFILVCILGTAGLFLQPLMARDDT.

The signal sequence occupies residues Met-1–Ala-25. Residues Ser-26–Ile-244 lie on the Extracellular side of the membrane. N-linked (GlcNAc...) asparagine glycans are attached at residues Asn-49 and Asn-166. Cystine bridges form between Cys-153–Cys-167 and Cys-217–Cys-218. Residues Pro-245–Pro-260 form a helical membrane-spanning segment. Over Ser-261–Asp-262 the chain is Cytoplasmic. Residues Cys-263–Val-279 form a helical membrane-spanning segment. Glu-265 lines the Na(+) pocket. Residues Phe-280 to Tyr-301 lie on the Extracellular side of the membrane. Residues Leu-302 to Leu-320 traverse the membrane as a helical segment. Residues Asn-321 to Val-468 are Cytoplasmic-facing. Phosphoserine is present on residues Ser-407 and Ser-410. Residues Ile-469–Gly-487 traverse the membrane as a helical segment. At Leu-488 to Thr-499 the chain is on the extracellular side.

Belongs to the ligand-gated ion channel (TC 1.A.9) family. Acetylcholine receptor (TC 1.A.9.1) subfamily. Alpha-3/CHRNA3 sub-subfamily. As to quaternary structure, neuronal AChR is composed of two different types of subunits: alpha and beta. CHRNA3/Alpha-3 subunit can be combined to CHRNB2/beta-2 or CHRNB4/beta-4 to give rise to functional receptors. Part of a complex composed of STUB1/CHIP, VCP/p97, CHRNA3, and UBXN2A that modulates the ubiquitination and endoplasmic reticulum-associated degradation (ERAD) of CHRNA3. Within the complex UBXN2A acts as a scaffold protein required for the interaction of CHRNA3 with VCP/p97, this interaction also inhibits CHRNA3 ubiquitination by STUB1/CHIP and subsequently ERAD. Interacts with UBXN2A (via SEP domain), the interaction is required for the interaction of CHRNA3 in the STUB1:VCP:UBXN2A complex. Interacts with RIC3; which is required for proper folding and assembly. Interacts with LYPD6. Ubiquitinated; by STUB1/CHIP and thereafter degraded by the 26S proteosome complex. As to expression, expressed in the brain (at protein level).

The protein localises to the synaptic cell membrane. The protein resides in the cell membrane. Its subcellular location is the endoplasmic reticulum. It is found in the golgi apparatus. It carries out the reaction K(+)(in) = K(+)(out). The enzyme catalyses Na(+)(in) = Na(+)(out). It catalyses the reaction Ca(2+)(in) = Ca(2+)(out). With respect to regulation, activated by a myriad of ligands such as acetylcholine, cytisine, nicotine, choline and epibatidine. The heteropentamer CHRNA3:CHRNB2 activity is blocked by alpha-conotoxins ImI, ImII, PnIA, GID and MII. The heteropentamer CHRNA3:CHRNB4 activity is blocked by the alpha-conotoxin ImI. Component of neuronal acetylcholine receptors (nAChRs) that function as pentameric, ligand-gated cation channels with high calcium permeability among other activities. nAChRs are excitatory neurotrasnmitter receptors formed by a collection of nAChR subunits known to mediate synaptic transmission in the nervous system and the neuromuscular junction. Each nAchR subunit confers differential attributes to channel properties, including activation, deactivation and desensitization kinetics, pH sensitivity, cation permeability, and binding to allosteric modulators. CHRNA3 forms heteropentameric neuronal acetylcholine receptors with CHRNA5, CHRNB2 and CHRNB4. CHRNA3:CHRNB4 being predominant in neurons of the autonomic ganglia, it is known as ganglionic nicotinic receptor. CHRNA3:CHRNB4 or CHRNA3:CHRNA5:CHRNB4 play also an important role in the habenulo-interpeduncular tract, modulating the mesolimbic dopamine system and affecting reward circuits and addiction. Hypothalamic CHRNA3:CHRNB4 nAChR activation by nicotine leads to activation of POMC neurons and a decrease in food intake. Also expressed in the urothelium where it modulates reflex bladder activity by increasing intracellular calcium through extracellular influx and basal ATP release. The chain is Neuronal acetylcholine receptor subunit alpha-3 (Chrna3) from Mus musculus (Mouse).